Reading from the N-terminus, the 337-residue chain is Pyrophosphate--fructose 6-phosphate 1-phosphotransferase (337 aa).

A diphosphate-binding site is contributed by Gly-10. Asp-101 contributes to the Mg(2+) binding site. Residues 124-126 (TID), Arg-161, 168-170 (MGR), Glu-220, Arg-257, and 263-266 (HTIR) contribute to the substrate site. The Proton acceptor role is filled by Asp-126.

Belongs to the phosphofructokinase type A (PFKA) family. Mixed-substrate PFK group III subfamily. Homodimer or homotrimer. Requires Mg(2+) as cofactor.

Its subcellular location is the cytoplasm. It carries out the reaction beta-D-fructose 6-phosphate + diphosphate = beta-D-fructose 1,6-bisphosphate + phosphate + H(+). It functions in the pathway carbohydrate degradation; glycolysis; D-glyceraldehyde 3-phosphate and glycerone phosphate from D-glucose: step 3/4. With respect to regulation, non-allosteric. In terms of biological role, catalyzes the phosphorylation of D-fructose 6-phosphate, the first committing step of glycolysis. Uses inorganic phosphate (PPi) as phosphoryl donor instead of ATP like common ATP-dependent phosphofructokinases (ATP-PFKs), which renders the reaction reversible, and can thus function both in glycolysis and gluconeogenesis. Consistently, PPi-PFK can replace the enzymes of both the forward (ATP-PFK) and reverse (fructose-bisphosphatase (FBPase)) reactions. This is Pyrophosphate--fructose 6-phosphate 1-phosphotransferase from Thermoproteus tenax (strain ATCC 35583 / DSM 2078 / JCM 9277 / NBRC 100435 / Kra 1).